A 401-amino-acid polypeptide reads, in one-letter code: tRNA pseudouridine synthase Pus10 (401 aa).

Residues 64-195 (ALAKSGHRES…DGSVSVEVMP (132 aa)) enclose the THUMP domain.

It belongs to the pseudouridine synthase Pus10 family.

The enzyme catalyses uridine(54) in tRNA = pseudouridine(54) in tRNA. It carries out the reaction uridine(55) in tRNA = pseudouridine(55) in tRNA. Its function is as follows. Responsible for synthesis of pseudouridine from uracil-54 and uracil-55 in the psi GC loop of transfer RNAs. The sequence is that of tRNA pseudouridine synthase Pus10 from Caldivirga maquilingensis (strain ATCC 700844 / DSM 13496 / JCM 10307 / IC-167).